The following is a 500-amino-acid chain: Abscisic acid 8'-hydroxylase 3 (500 aa).

The chain crosses the membrane as a helical span at residues 3-23 (ASFVIVIVISFFISLAFMCYV). A heme-binding site is contributed by Cys-426.

This sequence belongs to the cytochrome P450 family. The cofactor is heme.

It localises to the membrane. The enzyme catalyses 2-cis-(+)-abscisate + reduced [NADPH--hemoprotein reductase] + O2 = (+)-8'-hydroxyabscisate + oxidized [NADPH--hemoprotein reductase] + H2O + H(+). Its pathway is plant hormone degradation; abscisic acid degradation. Its function is as follows. Involved in the oxidative degradation of abscisic acid. In Oryza sativa subsp. indica (Rice), this protein is Abscisic acid 8'-hydroxylase 3 (CYP707A7).